Consider the following 119-residue polypeptide: Holo-[acyl-carrier-protein] synthase (119 aa).

2 residues coordinate Mg(2+): aspartate 8 and glutamate 50.

Belongs to the P-Pant transferase superfamily. AcpS family. Mg(2+) serves as cofactor.

It is found in the cytoplasm. It carries out the reaction apo-[ACP] + CoA = holo-[ACP] + adenosine 3',5'-bisphosphate + H(+). Transfers the 4'-phosphopantetheine moiety from coenzyme A to a Ser of acyl-carrier-protein. This Clavibacter sepedonicus (Clavibacter michiganensis subsp. sepedonicus) protein is Holo-[acyl-carrier-protein] synthase.